The following is a 77-amino-acid chain: Antitoxin VapB2 (77 aa).

Positions 4–46 constitute a SpoVT-AbrB domain; sequence ASVFMTNRSQAVRLPAEVRFSEEIKKLSVRVSGSDRILSPLNQ.

The protein belongs to the VapB family. As to quaternary structure, probably forms a complex with cognate toxin VapC2.

Antitoxin component of a type II toxin-antitoxin (TA) system. Neutralizes the effect of cognate toxin VapC2 but not non-cognate toxin VapC2. This chain is Antitoxin VapB2, found in Haemophilus influenzae (strain 86-028NP).